The sequence spans 245 residues: Nicotinamide/nicotinic acid mononucleotide adenylyltransferase 3 (245 aa).

NAD(+)-binding residues include S14 and F15. ATP is bound by residues H22 and K56. NAD(+) is bound by residues W90, T93, G134, and D136. Residue K139 coordinates ATP. The NAD(+) site is built by L146, W147, R166, and N197. 202 to 205 contacts ATP; sequence TYVR.

This sequence belongs to the eukaryotic NMN adenylyltransferase family. In terms of assembly, homotetramer. Requires Mg(2+) as cofactor.

The protein localises to the mitochondrion. It catalyses the reaction beta-nicotinamide D-ribonucleotide + ATP + H(+) = diphosphate + NAD(+). The catalysed reaction is nicotinate beta-D-ribonucleotide + ATP + H(+) = deamido-NAD(+) + diphosphate. It functions in the pathway cofactor biosynthesis; NAD(+) biosynthesis; NAD(+) from nicotinamide D-ribonucleotide: step 1/1. Its pathway is cofactor biosynthesis; NAD(+) biosynthesis; deamido-NAD(+) from nicotinate D-ribonucleotide: step 1/1. Its activity is regulated as follows. Activity is strongly inhibited by galotannin. Inhibited by P1-(adenosine-5')-P4-(nicotinic-acid-riboside-5')-tetraphosphate (Nap4AD). In terms of biological role, catalyzes the formation of NAD(+) from nicotinamide mononucleotide (NMN) and ATP. Can also use the deamidated form; nicotinic acid mononucleotide (NaMN) as substrate with the same efficiency. Can use triazofurin monophosphate (TrMP) as substrate. Can also use GTP and ITP as nucleotide donors. Also catalyzes the reverse reaction, i.e. the pyrophosphorolytic cleavage of NAD(+). For the pyrophosphorolytic activity, can use NAD(+), NADH, NaAD, nicotinic acid adenine dinucleotide phosphate (NHD), nicotinamide guanine dinucleotide (NGD) as substrates. Fails to cleave phosphorylated dinucleotides NADP(+), NADPH and NaADP(+). Protects against axonal degeneration following injury. May be involved in the maintenance of axonal integrity. Also functions as a stress-response chaperone protein that prevents toxic aggregation of proteins; this function may be independent of its NAD(+) synthesis activity. The polypeptide is Nicotinamide/nicotinic acid mononucleotide adenylyltransferase 3 (Mus musculus (Mouse)).